The sequence spans 132 residues: Secreted RxLR effector protein BLR08 (132 aa).

The N-terminal stretch at 1–22 (MRHKCLLAMAVVASMAFYSVIS) is a signal peptide. Residue Asn25 is glycosylated (N-linked (GlcNAc...) asparagine). The disordered stretch occupies residues 36–57 (NRRLRPRVEPTANELDKQSDVD). The short motif at 37–83 (RRLRPRVEPTANELDKQSDVDTKLEADRRLGYPGESGFMLEGELEER) is the RxLR-dEER element. A helical transmembrane segment spans residues 111–131 (FFLGLFASVIGVSIISACYGI).

This sequence belongs to the RxLR effector family. As to quaternary structure, interacts with host transcription factor NAC069.

It localises to the secreted. Its subcellular location is the host endoplasmic reticulum membrane. Secreted effector that inhibits stress-induced relocalization of the transcription factor NAC069 to the nucleus, thus affecting its broad role in abiotic and biotic stress responses. The sequence is that of Secreted RxLR effector protein BLR08 from Bremia lactucae (Lettuce downy mildew).